Reading from the N-terminus, the 227-residue chain is uncharacterized protein (227 aa).

2 helical membrane passes run 113-133 (IMLILMILSMILIIPLFFIVF) and 141-161 (FGICLTLLFYIAIFILTNGLI).

Its subcellular location is the membrane. This is an uncharacterized protein from Dictyostelium discoideum (Social amoeba).